Reading from the N-terminus, the 506-residue chain is Probable alpha-L-arabinofuranosidase B (506 aa).

The N-terminal stretch at 1–26 (MSSGLSLERACAVALGIVASASLVAA) is a signal peptide. The catalytic stretch occupies residues 27-343 (GPCDIYSSGG…ADIVAAKYAI (317 aa)). Intrachain disulfides connect Cys29–Cys39, Cys89–Cys94, and Cys184–Cys185. N-linked (GlcNAc...) asparagine glycosylation occurs at Asn91. Substrate is bound at residue Asp227. Catalysis depends on Glu229, which acts as the Nucleophile. 2 residues coordinate substrate: Asn230 and Gly304. Asp305 (proton donor) is an active-site residue. The interval 344–506 (ASLTSGPALT…VSWVVSTGFA (163 aa)) is ABD. A disulfide bridge links Cys409 with Cys447. Substrate is bound by residues His424, Asn426, Phe427, Asp443, His471, Glu473, Leu476, and Asp496.

This sequence belongs to the glycosyl hydrolase 54 family.

The protein resides in the secreted. The catalysed reaction is Hydrolysis of terminal non-reducing alpha-L-arabinofuranoside residues in alpha-L-arabinosides.. It participates in glycan metabolism; L-arabinan degradation. Functionally, alpha-L-arabinofuranosidase involved in the degradation of arabinoxylan, a major component of plant hemicellulose. Able to hydrolyze 1,5-, 1,3- and 1,2-alpha-linkages not only in L-arabinofuranosyl oligosaccharides, but also in polysaccharides containing terminal non-reducing L-arabinofuranoses in side chains, like L-arabinan, arabinogalactan and arabinoxylan. This chain is Probable alpha-L-arabinofuranosidase B (abfB), found in Aspergillus flavus (strain ATCC 200026 / FGSC A1120 / IAM 13836 / NRRL 3357 / JCM 12722 / SRRC 167).